The primary structure comprises 661 residues: Kyphoscoliosis peptidase (661 aa).

The disordered stretch occupies residues Gly-116–Trp-137. Active-site residues include Cys-225, His-267, and Asp-282.

Belongs to the transglutaminase-like superfamily. Interacts with IGFN1 and FLNC. As to expression, specifically expressed in skeletal and cardiac muscle.

It is found in the cytoplasm. Its subcellular location is the cytoskeleton. It localises to the myofibril. The protein localises to the sarcomere. The protein resides in the z line. In terms of biological role, probable cytoskeleton-associated protease required for normal muscle growth. Involved in function, maturation and stabilization of the neuromuscular junction. May act by cleaving muscle-specific proteins such as FLNC. This Mus musculus (Mouse) protein is Kyphoscoliosis peptidase.